Consider the following 505-residue polypeptide: Histidine ammonia-lyase (505 aa).

Positions 141–143 (ASG) form a cross-link, 5-imidazolinone (Ala-Gly). Residue Ser-142 is modified to 2,3-didehydroalanine (Ser).

It belongs to the PAL/histidase family. Post-translationally, contains an active site 4-methylidene-imidazol-5-one (MIO), which is formed autocatalytically by cyclization and dehydration of residues Ala-Ser-Gly.

The protein resides in the cytoplasm. The enzyme catalyses L-histidine = trans-urocanate + NH4(+). Its pathway is amino-acid degradation; L-histidine degradation into L-glutamate; N-formimidoyl-L-glutamate from L-histidine: step 1/3. This chain is Histidine ammonia-lyase, found in Bacillus cereus (strain 03BB102).